A 520-amino-acid chain; its full sequence is Bile acid--coenzyme A ligase (520 aa).

The protein belongs to the ATP-dependent AMP-binding enzyme family. As to quaternary structure, homodimer. Mg(2+) is required as a cofactor.

It catalyses the reaction cholate + ATP + CoA = choloyl-CoA + AMP + diphosphate. The catalysed reaction is deoxycholate + ATP + CoA = deoxycholoyl-CoA + AMP + diphosphate. It carries out the reaction chenodeoxycholate + ATP + CoA = chenodeoxycholoyl-CoA + AMP + diphosphate. The protein operates within lipid metabolism; bile acid biosynthesis. Its activity is regulated as follows. Inhibited by diphosphate. Functionally, functions in the bile acid 7alpha-dehydroxylation pathway, which forms secondary bile acids via the 7alpha-dehydroxylation of primary bile acids, and is carried out by intestinal anaerobic bacteria. Catalyzes the initial step in this pathway, i.e. the ATP-dependent thioesterification of primary bile acids with coenzyme A. Is active with C-24 bile acids with free carboxyl groups such as cholate, deoxycholate and chenodeoxycholate. Produces AMP and pyrophosphate in addition to the bile acid-CoA thioester. This is Bile acid--coenzyme A ligase from Clostridium scindens (strain JCM 10418 / VPI 12708).